Reading from the N-terminus, the 866-residue chain is Speckle targeted PIP5K1A-regulated poly(A) polymerase (866 aa).

A Matrin-type zinc finger spans residues 16–46 (FRCCLCDVTTANRPSLDAHLKGRKHRDLVQL). The 73-residue stretch at 56 to 128 (RSVFVSGFPR…HTLRVRPREQ (73 aa)) folds into the RRM domain. Residues 116–147 (LGGHTLRVRPREQKEFQSPASKSPKGVDSNSH) are disordered. Position 205 (S205) interacts with ATP. Residues D216 and D218 each contribute to the Mg(2+) site. Residues D216 and D218 each coordinate UTP. Disordered stretches follow at residues 223–249 (LGDM…STLA) and 267–321 (LSPT…EGKH). The segment covering 282–304 (TPSSLAPQTPDSALGSDTVTSPQ) has biased composition (polar residues). N393 serves as a coordination point for ATP. 4 residues coordinate UTP: N393, R415, Y433, and H550. The 59-residue stretch at 492 to 550 (LSSLLAQFFSCVSCWDLSGSLLSLREGQALMVAGGLPSDLWEGLRLGPMNLQDPFDLSH) folds into the PAP-associated domain. Residues 599-866 (SSPSSLLSAK…IPQALKNLLK (268 aa)) form a KA1; binds the bulging loops of U6 snRNA but is dispensable for terminal uridylyltransferase activity region. 3 disordered regions span residues 638-687 (QGTK…DHSE), 728-755 (EQNP…PSSV), and 773-792 (RRRF…STGA). Positions 669–687 (KSCEEGKEEPQGCAGDHSE) are enriched in basic and acidic residues. 2 positions are modified to phosphoserine: S686 and S741.

This sequence belongs to the DNA polymerase type-B-like family. In terms of assembly, associates with the cleavage and polyadenylation specificity factor (CPSF) complex. Interacts with CPSF1 and CPSF3; the interaction is direct. Interacts with PIP5K1A. Requires Mg(2+) as cofactor. It depends on Mn(2+) as a cofactor. Phosphorylated by CK1 in the proline-rich (Pro-rich) region.

It is found in the nucleus. It localises to the nucleolus. The protein resides in the nucleus speckle. The catalysed reaction is RNA(n) + UTP = RNA(n)-3'-uridine ribonucleotide + diphosphate. It carries out the reaction RNA(n) + ATP = RNA(n)-3'-adenine ribonucleotide + diphosphate. Adenylyltransferase activity is specifically phosphatidylinositol 4,5-bisphosphate (PtdIns(4,5)P2). Its function is as follows. Poly(A) polymerase that creates the 3'-poly(A) tail of specific pre-mRNAs. Localizes to nuclear speckles together with PIP5K1A and mediates polyadenylation of a select set of mRNAs, such as HMOX1. In addition to polyadenylation, it is also required for the 3'-end cleavage of pre-mRNAs: binds to the 3'UTR of targeted pre-mRNAs and promotes the recruitment and assembly of the CPSF complex on the 3'UTR of pre-mRNAs. In addition to adenylyltransferase activity, also has uridylyltransferase activity. However, the ATP ratio is higher than UTP in cells, suggesting that it functions primarily as a poly(A) polymerase. Acts as a specific terminal uridylyltransferase for U6 snRNA in vitro: responsible for a controlled elongation reaction that results in the restoration of the four 3'-terminal UMP-residues found in newly transcribed U6 snRNA. Not involved in replication-dependent histone mRNA degradation. The chain is Speckle targeted PIP5K1A-regulated poly(A) polymerase (Tut1) from Rattus norvegicus (Rat).